The primary structure comprises 261 residues: Tryptophan synthase alpha chain (261 aa).

Residues E47 and D58 each act as proton acceptor in the active site.

This sequence belongs to the TrpA family. Tetramer of two alpha and two beta chains.

The enzyme catalyses (1S,2R)-1-C-(indol-3-yl)glycerol 3-phosphate + L-serine = D-glyceraldehyde 3-phosphate + L-tryptophan + H2O. The protein operates within amino-acid biosynthesis; L-tryptophan biosynthesis; L-tryptophan from chorismate: step 5/5. In terms of biological role, the alpha subunit is responsible for the aldol cleavage of indoleglycerol phosphate to indole and glyceraldehyde 3-phosphate. In Neisseria meningitidis serogroup B (strain ATCC BAA-335 / MC58), this protein is Tryptophan synthase alpha chain.